Here is a 208-residue protein sequence, read N- to C-terminus: Putative ankyrin repeat protein Ta0196 (208 aa).

ANK repeat units lie at residues Y49–D78, E82–I111, A115–I144, and E148–A177.

The chain is Putative ankyrin repeat protein Ta0196 from Thermoplasma acidophilum (strain ATCC 25905 / DSM 1728 / JCM 9062 / NBRC 15155 / AMRC-C165).